The primary structure comprises 342 residues: Succinylglutamate desuccinylase (342 aa).

Residues histidine 63, glutamate 66, and histidine 155 each coordinate Zn(2+). Residue glutamate 219 is part of the active site.

Belongs to the AspA/AstE family. Succinylglutamate desuccinylase subfamily. The cofactor is Zn(2+).

The catalysed reaction is N-succinyl-L-glutamate + H2O = L-glutamate + succinate. The protein operates within amino-acid degradation; L-arginine degradation via AST pathway; L-glutamate and succinate from L-arginine: step 5/5. Functionally, transforms N(2)-succinylglutamate into succinate and glutamate. This chain is Succinylglutamate desuccinylase, found in Vibrio vulnificus (strain YJ016).